The sequence spans 359 residues: Trans-enoyl reductase RAP1 (359 aa).

Residue 49–52 participates in NADP(+) binding; it reads CDFK. 137–144 is a substrate binding site; it reads TCIATACM. NADP(+)-binding positions include 195-198, Y213, and 260-261; these read SPKN and LE. Substrate is bound at residue 281–285; sequence GQMIL. Residue 350–351 participates in NADP(+) binding; that stretch reads VA.

Belongs to the zinc-containing alcohol dehydrogenase family. Monomer.

The protein operates within secondary metabolite biosynthesis. Functionally, trans-enoyl reductase; part of the gene cluster that mediates the biosynthesis of a tyrosine-derived cytochalasan acting as a fungal signal recognized by resistant rice plants and leads to avirulence in Pi33 resistant rice cultivars. The first step in the pathway is catalyzed by the hybrid PKS-NRPS ACE1, assisted by the enoyl reductase RAP1, that are responsible for fusion of the tyrosine precursor and the polyketide backbone. The polyketide synthase module (PKS) of ACE1 is responsible for the synthesis of the polyketide backbone and the downstream nonribosomal peptide synthetase (NRPS) amidates the carboxyl end of the polyketide with the tyrosine precursor. Because ACE1 lacks a designated enoylreductase (ER) domain, the required activity is provided the enoyl reductase RAP1. Reduction by the hydrolyase ORFZ, followed by dehydration and intra-molecular Diels-Alder cyclization by the Diels-Alderase ORF3 then yield the required isoindolone-fused macrocycle. A number of oxidative steps catalyzed by the tailoring enzymes identified within the cluster, including cytochrome P450 monooxygenases CYP1 to CYP4, the FAD-linked oxidoreductase OXR2 and the short-chain dehydrogenase/reductase OXR1, are further required to afford the final cytochalasans that confer avirulence and which have still to be identified. The monooxygenase CYP1 has been shown to be a site-selective C-18 hydroxylase whereas the function of CYP3 is the site-selective epoxidation of the C-6/C-7 olefin that is present in some intermediate compounds. Finally, SYN2 and RAP2 are not required for avirulence in Pi33 resistant rice cultivars. The protein is Trans-enoyl reductase RAP1 of Pyricularia oryzae (strain 70-15 / ATCC MYA-4617 / FGSC 8958) (Rice blast fungus).